Here is a 441-residue protein sequence, read N- to C-terminus: Arginine biosynthesis bifunctional protein ArgJ, mitochondrial (441 aa).

Substrate-binding residues include T177, K204, T215, E301, N436, and S441. The Nucleophile role is filled by T215.

Belongs to the ArgJ family. Heterodimer of an alpha and a beta chain. Post-translationally, the alpha and beta chains are autoproteolytically processed from a single precursor protein within the mitochondrion.

It is found in the mitochondrion matrix. It catalyses the reaction N(2)-acetyl-L-ornithine + L-glutamate = N-acetyl-L-glutamate + L-ornithine. The catalysed reaction is L-glutamate + acetyl-CoA = N-acetyl-L-glutamate + CoA + H(+). The protein operates within amino-acid biosynthesis; L-arginine biosynthesis; L-ornithine and N-acetyl-L-glutamate from L-glutamate and N(2)-acetyl-L-ornithine (cyclic): step 1/1. It functions in the pathway amino-acid biosynthesis; L-arginine biosynthesis; N(2)-acetyl-L-ornithine from L-glutamate: step 1/4. Its function is as follows. Catalyzes two activities which are involved in the cyclic version of arginine biosynthesis: the synthesis of acetylglutamate from glutamate and acetyl-CoA, and of ornithine by transacetylation between acetylornithine and glutamate. This chain is Arginine biosynthesis bifunctional protein ArgJ, mitochondrial, found in Candida glabrata (strain ATCC 2001 / BCRC 20586 / JCM 3761 / NBRC 0622 / NRRL Y-65 / CBS 138) (Yeast).